A 259-amino-acid chain; its full sequence is Undecaprenyl-diphosphatase (259 aa).

Transmembrane regions (helical) follow at residues Met-1 to Ile-21, Gln-40 to Trp-60, Trp-75 to Glu-95, Leu-101 to Leu-121, Ser-179 to Leu-199, Leu-206 to Ile-226, and Thr-239 to Phe-259.

Belongs to the UppP family.

Its subcellular location is the cell inner membrane. It carries out the reaction di-trans,octa-cis-undecaprenyl diphosphate + H2O = di-trans,octa-cis-undecaprenyl phosphate + phosphate + H(+). In terms of biological role, catalyzes the dephosphorylation of undecaprenyl diphosphate (UPP). Confers resistance to bacitracin. The chain is Undecaprenyl-diphosphatase from Halothermothrix orenii (strain H 168 / OCM 544 / DSM 9562).